The primary structure comprises 454 residues: Guanine deaminase (454 aa).

2 residues coordinate Zn(2+): histidine 82 and histidine 84. Substrate is bound by residues histidine 84 to glutamine 87, arginine 213 to phenylalanine 214, histidine 240 to glutamate 243, and aspartate 330. Zn(2+) contacts are provided by histidine 240 and aspartate 330. Serine 453 is subject to Phosphoserine.

It belongs to the metallo-dependent hydrolases superfamily. ATZ/TRZ family. Homodimer. Zn(2+) serves as cofactor.

It carries out the reaction guanine + H2O + H(+) = xanthine + NH4(+). It functions in the pathway purine metabolism; guanine degradation; xanthine from guanine: step 1/1. Catalyzes the hydrolytic deamination of guanine, producing xanthine and ammonia. In Pongo abelii (Sumatran orangutan), this protein is Guanine deaminase (GDA).